The sequence spans 208 residues: Riboflavin synthase (208 aa).

Lumazine-binding repeat units lie at residues Met-1–His-97 and Ile-98–Thr-195. Residues Gly-4–Val-6, Cys-48–Thr-50, Asp-62–Thr-67, Gly-101–Ile-103, Lys-137, Ser-146–Thr-148, and Ser-160–Thr-165 contribute to the 2,4-dihydroxypteridine site.

Homotrimer.

It carries out the reaction 2 6,7-dimethyl-8-(1-D-ribityl)lumazine + H(+) = 5-amino-6-(D-ribitylamino)uracil + riboflavin. The protein operates within cofactor biosynthesis; riboflavin biosynthesis; riboflavin from 2-hydroxy-3-oxobutyl phosphate and 5-amino-6-(D-ribitylamino)uracil: step 2/2. In terms of biological role, catalyzes the dismutation of two molecules of 6,7-dimethyl-8-ribityllumazine, resulting in the formation of riboflavin and 5-amino-6-(D-ribitylamino)uracil. The sequence is that of Riboflavin synthase (ribE) from Buchnera aphidicola subsp. Schizaphis graminum (strain Sg).